Reading from the N-terminus, the 293-residue chain is Probable flavonol synthase 6 (293 aa).

The Fe2OG dioxygenase domain occupies 156 to 253; it reads KAQYVMRINY…RMSWPILVEP (98 aa). 2-oxoglutarate is bound at residue 164-166; that stretch reads NYY. 3 residues coordinate Fe cation: H178, D180, and H234. Residue 244–246 coordinates 2-oxoglutarate; it reads RMS.

Belongs to the iron/ascorbate-dependent oxidoreductase family. The cofactor is Fe(2+).

It catalyses the reaction a (2R,3R)-dihydroflavonol + 2-oxoglutarate + O2 = a flavonol + succinate + CO2 + H2O. It participates in secondary metabolite biosynthesis; flavonoid biosynthesis. The chain is Probable flavonol synthase 6 (FLS6) from Arabidopsis thaliana (Mouse-ear cress).